We begin with the raw amino-acid sequence, 334 residues long: Inositol 2-dehydrogenase (334 aa).

Belongs to the Gfo/Idh/MocA family. In terms of assembly, homotetramer.

It catalyses the reaction myo-inositol + NAD(+) = scyllo-inosose + NADH + H(+). Involved in the oxidation of myo-inositol (MI) to 2-keto-myo-inositol (2KMI or 2-inosose). This chain is Inositol 2-dehydrogenase, found in Cereibacter sphaeroides (strain ATCC 17029 / ATH 2.4.9) (Rhodobacter sphaeroides).